Here is a 700-residue protein sequence, read N- to C-terminus: DNA ligase (700 aa).

Residues 42–46 (DDEYD), 91–92 (SL), and glutamate 126 each bind NAD(+). Lysine 128 functions as the N6-AMP-lysine intermediate in the catalytic mechanism. The NAD(+) site is built by arginine 149, glutamate 184, lysine 300, and lysine 324. The Zn(2+) site is built by cysteine 418, cysteine 421, cysteine 436, and cysteine 441. Positions 598–686 (TRTDQLSGLN…GLGERGVAED (89 aa)) constitute a BRCT domain.

Belongs to the NAD-dependent DNA ligase family. LigA subfamily. Requires Mn(2+) as cofactor.

The catalysed reaction is NAD(+) + (deoxyribonucleotide)n-3'-hydroxyl + 5'-phospho-(deoxyribonucleotide)m = (deoxyribonucleotide)n+m + AMP + beta-nicotinamide D-nucleotide.. Functionally, DNA ligase that catalyzes the formation of phosphodiester linkages between 5'-phosphoryl and 3'-hydroxyl groups in double-stranded DNA using NAD as a coenzyme and as the energy source for the reaction. It is essential for DNA replication and repair of damaged DNA. This is DNA ligase from Deinococcus radiodurans (strain ATCC 13939 / DSM 20539 / JCM 16871 / CCUG 27074 / LMG 4051 / NBRC 15346 / NCIMB 9279 / VKM B-1422 / R1).